A 115-amino-acid chain; its full sequence is Large ribosomal subunit protein uL24 (115 aa).

Residues 49–68 form a disordered region; sequence NMKTKHHPPSKDQEKGSITK.

It belongs to the universal ribosomal protein uL24 family. Part of the 50S ribosomal subunit.

In terms of biological role, one of two assembly initiator proteins, it binds directly to the 5'-end of the 23S rRNA, where it nucleates assembly of the 50S subunit. Its function is as follows. One of the proteins that surrounds the polypeptide exit tunnel on the outside of the subunit. The protein is Large ribosomal subunit protein uL24 of Phytoplasma australiense.